We begin with the raw amino-acid sequence, 65 residues long: Large ribosomal subunit protein bL35 (65 aa).

A disordered region spans residues 1–52 (MPKIKTNRGAAKRFKRTGSGGFKCVQSHRRHILTKKSTKRKRQLRSPDMVHP). A compositionally biased stretch (basic residues) spans 26 to 44 (QSHRRHILTKKSTKRKRQL).

This sequence belongs to the bacterial ribosomal protein bL35 family.

This Methylococcus capsulatus (strain ATCC 33009 / NCIMB 11132 / Bath) protein is Large ribosomal subunit protein bL35.